A 202-amino-acid chain; its full sequence is Small ribosomal subunit protein bS20c (202 aa).

The N-terminal 79 residues, 1–79 (MATIVQCLSS…KPMRQLIVCE (79 aa)), are a transit peptide targeting the chloroplast. The disordered stretch occupies residues 89-110 (SAAKRARQAEKRRVYNKSKKSE).

Belongs to the bacterial ribosomal protein bS20 family. In terms of assembly, part of the 30S ribosomal subunit.

Its subcellular location is the plastid. The protein localises to the chloroplast. In terms of biological role, binds directly to 16S ribosomal RNA. This is Small ribosomal subunit protein bS20c (RPS20) from Arabidopsis thaliana (Mouse-ear cress).